The chain runs to 640 residues: DNA mismatch repair protein MutL (640 aa).

2 disordered regions span residues Pro-332–Pro-353 and Pro-408–Asp-431.

Belongs to the DNA mismatch repair MutL/HexB family.

Functionally, this protein is involved in the repair of mismatches in DNA. It is required for dam-dependent methyl-directed DNA mismatch repair. May act as a 'molecular matchmaker', a protein that promotes the formation of a stable complex between two or more DNA-binding proteins in an ATP-dependent manner without itself being part of a final effector complex. The sequence is that of DNA mismatch repair protein MutL from Chloroherpeton thalassium (strain ATCC 35110 / GB-78).